The chain runs to 334 residues: L-lactate dehydrogenase B-A chain (334 aa).

Residues 30-58 and arginine 100 contribute to the NAD(+) site; that span reads GQVG…VEDR. 3 residues coordinate substrate: arginine 107, asparagine 139, and arginine 170. Residue asparagine 139 coordinates NAD(+). The active-site Proton acceptor is histidine 194. Threonine 249 serves as a coordination point for substrate.

Belongs to the LDH/MDH superfamily. LDH family. As to quaternary structure, homotetramer.

It localises to the cytoplasm. The enzyme catalyses (S)-lactate + NAD(+) = pyruvate + NADH + H(+). It functions in the pathway fermentation; pyruvate fermentation to lactate; (S)-lactate from pyruvate: step 1/1. In Danio rerio (Zebrafish), this protein is L-lactate dehydrogenase B-A chain (ldhba).